The following is a 462-amino-acid chain: Hyaluronidase-1 (462 aa).

An N-terminal signal peptide occupies residues 1–52 (MLGLTQHAQKVWRMKPFSPEVSPGSSPATAGHLLRISTLFLTLLELAQVCRG). 2 disulfide bridges follow: Cys-71/Cys-361 and Cys-235/Cys-249. 2 N-linked (GlcNAc...) asparagine glycosylation sites follow: Asn-98 and Asn-127. The active-site Proton donor is the Glu-159. 3 N-linked (GlcNAc...) asparagine glycosylation sites follow: Asn-244, Asn-265, and Asn-378. Cystine bridges form between Cys-386–Cys-397, Cys-391–Cys-446, and Cys-448–Cys-457. The region spanning 446 to 457 (CRCYRGWRGKWC) is the EGF-like domain.

This sequence belongs to the glycosyl hydrolase 56 family. In terms of tissue distribution, highly expressed in liver, kidney, lung and skin.

It localises to the secreted. The protein resides in the lysosome. It catalyses the reaction Random hydrolysis of (1-&gt;4)-linkages between N-acetyl-beta-D-glucosamine and D-glucuronate residues in hyaluronate.. Its function is as follows. May have a role in promoting tumor progression. May block the TGFB1-enhanced cell growth. The chain is Hyaluronidase-1 (Hyal1) from Mus musculus (Mouse).